Reading from the N-terminus, the 532-residue chain is Exopolysaccharide phosphotransferase CpsY (532 aa).

This sequence belongs to the stealth family.

The protein is Exopolysaccharide phosphotransferase CpsY (cpsY) of Mycobacterium bovis (strain ATCC BAA-935 / AF2122/97).